Consider the following 513-residue polypeptide: Glucose-1-phosphate adenylyltransferase small subunit, chloroplastic/amyloplastic (513 aa).

Residues 1 to 64 (MAMAAAASPS…RRPFFFSPRA (64 aa)) constitute a chloroplast transit peptide.

It belongs to the bacterial/plant glucose-1-phosphate adenylyltransferase family. In terms of assembly, heterotetramer. In terms of tissue distribution, leaves and starchy endosperm.

It localises to the plastid. Its subcellular location is the chloroplast. The protein resides in the amyloplast. It carries out the reaction alpha-D-glucose 1-phosphate + ATP + H(+) = ADP-alpha-D-glucose + diphosphate. Its pathway is glycan biosynthesis; starch biosynthesis. Its activity is regulated as follows. Activated by 3'phosphoglycerate, inhibited by orthophosphate. Allosteric regulation. In terms of biological role, this protein plays a role in synthesis of starch. It catalyzes the synthesis of the activated glycosyl donor, ADP-glucose from Glc-1-P and ATP. The protein is Glucose-1-phosphate adenylyltransferase small subunit, chloroplastic/amyloplastic of Hordeum vulgare (Barley).